A 295-amino-acid polypeptide reads, in one-letter code: Tyrosine recombinase XerC (295 aa).

A Core-binding (CB) domain is found at 1–85; sequence MHILLQKYYN…ALRQFLNYLV (85 aa). Residues 106–285 enclose the Tyr recombinase domain; sequence YLPKNMDMEQ…DFQHLAQVYD (180 aa). Catalysis depends on residues R145, K169, H237, R240, and H263. Y272 acts as the O-(3'-phospho-DNA)-tyrosine intermediate in catalysis.

It belongs to the 'phage' integrase family. XerC subfamily. Forms a cyclic heterotetrameric complex composed of two molecules of XerC and two molecules of XerD.

It is found in the cytoplasm. Functionally, site-specific tyrosine recombinase, which acts by catalyzing the cutting and rejoining of the recombining DNA molecules. The XerC-XerD complex is essential to convert dimers of the bacterial chromosome into monomers to permit their segregation at cell division. It also contributes to the segregational stability of plasmids. This chain is Tyrosine recombinase XerC, found in Histophilus somni (strain 2336) (Haemophilus somnus).